A 289-amino-acid chain; its full sequence is Bifunctional protein FolD (289 aa).

Residues 166–168 (GRS), serine 191, and isoleucine 232 each bind NADP(+).

It belongs to the tetrahydrofolate dehydrogenase/cyclohydrolase family. As to quaternary structure, homodimer.

The enzyme catalyses (6R)-5,10-methylene-5,6,7,8-tetrahydrofolate + NADP(+) = (6R)-5,10-methenyltetrahydrofolate + NADPH. The catalysed reaction is (6R)-5,10-methenyltetrahydrofolate + H2O = (6R)-10-formyltetrahydrofolate + H(+). Its pathway is one-carbon metabolism; tetrahydrofolate interconversion. Its function is as follows. Catalyzes the oxidation of 5,10-methylenetetrahydrofolate to 5,10-methenyltetrahydrofolate and then the hydrolysis of 5,10-methenyltetrahydrofolate to 10-formyltetrahydrofolate. In Synechococcus sp. (strain JA-3-3Ab) (Cyanobacteria bacterium Yellowstone A-Prime), this protein is Bifunctional protein FolD.